Here is a 192-residue protein sequence, read N- to C-terminus: MTEYLLLLISTVLVNNFVLVKFLGLCPFMGVSSKLESAIGMSMATTFVLTLASILSYLVNQYLLLPFDLSYLRTMSFILVIAVVVQFTEMVVQKTSAALHRALGIYLPLITTNCAVLGVALLNVNEKHDFIQSAIYGFGAALGFSLVLILFSAMRERLAAADVPLPFKGGAIAMITAGLMSLAFMGFTGLVK.

Helical transmembrane passes span 5–25, 39–59, 65–85, 102–122, 134–154, and 171–191; these read LLLL…FLGL, IGMS…SYLV, LPFD…AVVV, ALGI…VALL, AIYG…FSAM, and AIAM…TGLV.

This sequence belongs to the NqrDE/RnfAE family. The complex is composed of six subunits: RnfA, RnfB, RnfC, RnfD, RnfE and RnfG.

The protein localises to the cell inner membrane. Part of a membrane-bound complex that couples electron transfer with translocation of ions across the membrane. This chain is Ion-translocating oxidoreductase complex subunit A, found in Shewanella baltica (strain OS185).